Reading from the N-terminus, the 124-residue chain is Ribonuclease pancreatic (124 aa).

The interval 1-21 (AESSAMKFQRQHMDSDGHPDT) is disordered. Substrate contacts are provided by Lys-7 and Arg-10. His-12 acts as the Proton acceptor in catalysis. 4 cysteine pairs are disulfide-bonded: Cys-26-Cys-84, Cys-40-Cys-95, Cys-58-Cys-110, and Cys-65-Cys-72. Residues 41 to 45 (KPVNT), Lys-66, and Arg-85 each bind substrate. His-119 (proton donor) is an active-site residue.

The protein belongs to the pancreatic ribonuclease family. As to quaternary structure, monomer. Interacts with and forms tight 1:1 complexes with RNH1. Dimerization of two such complexes may occur. Interaction with RNH1 inhibits this protein. As to expression, pancreas.

It is found in the secreted. It catalyses the reaction an [RNA] containing cytidine + H2O = an [RNA]-3'-cytidine-3'-phosphate + a 5'-hydroxy-ribonucleotide-3'-[RNA].. It carries out the reaction an [RNA] containing uridine + H2O = an [RNA]-3'-uridine-3'-phosphate + a 5'-hydroxy-ribonucleotide-3'-[RNA].. Endonuclease that catalyzes the cleavage of RNA on the 3' side of pyrimidine nucleotides. Acts on single-stranded and double-stranded RNA. The chain is Ribonuclease pancreatic (RNASE1) from Galea musteloides (Common yellow-toothed cavy).